The primary structure comprises 366 residues: 4-hydroxy-3-methylbut-2-en-1-yl diphosphate synthase (flavodoxin) (366 aa).

[4Fe-4S] cluster contacts are provided by Cys270, Cys273, Cys305, and Glu312.

This sequence belongs to the IspG family. [4Fe-4S] cluster is required as a cofactor.

The enzyme catalyses (2E)-4-hydroxy-3-methylbut-2-enyl diphosphate + oxidized [flavodoxin] + H2O + 2 H(+) = 2-C-methyl-D-erythritol 2,4-cyclic diphosphate + reduced [flavodoxin]. The protein operates within isoprenoid biosynthesis; isopentenyl diphosphate biosynthesis via DXP pathway; isopentenyl diphosphate from 1-deoxy-D-xylulose 5-phosphate: step 5/6. Functionally, converts 2C-methyl-D-erythritol 2,4-cyclodiphosphate (ME-2,4cPP) into 1-hydroxy-2-methyl-2-(E)-butenyl 4-diphosphate. The chain is 4-hydroxy-3-methylbut-2-en-1-yl diphosphate synthase (flavodoxin) from Acidithiobacillus ferrooxidans (strain ATCC 53993 / BNL-5-31) (Leptospirillum ferrooxidans (ATCC 53993)).